Here is a 317-residue protein sequence, read N- to C-terminus: tRNA dimethylallyltransferase (317 aa).

ATP is bound at residue 14–21 (GPTASGKS). Residue 16 to 21 (TASGKS) coordinates substrate. Interaction with substrate tRNA regions lie at residues 39 to 42 (DSVL) and 163 to 167 (QRIQR).

The protein belongs to the IPP transferase family. As to quaternary structure, monomer. Mg(2+) serves as cofactor.

The enzyme catalyses adenosine(37) in tRNA + dimethylallyl diphosphate = N(6)-dimethylallyladenosine(37) in tRNA + diphosphate. Functionally, catalyzes the transfer of a dimethylallyl group onto the adenine at position 37 in tRNAs that read codons beginning with uridine, leading to the formation of N6-(dimethylallyl)adenosine (i(6)A). This chain is tRNA dimethylallyltransferase, found in Xylella fastidiosa (strain M23).